Consider the following 208-residue polypeptide: Outer-membrane lipoprotein carrier protein (208 aa).

Positions 1 to 22 (MKNLLCAVMLTSPLLYSTAVFA) are cleaved as a signal peptide.

This sequence belongs to the LolA family. In terms of assembly, monomer.

It is found in the periplasm. Participates in the translocation of lipoproteins from the inner membrane to the outer membrane. Only forms a complex with a lipoprotein if the residue after the N-terminal Cys is not an aspartate (The Asp acts as a targeting signal to indicate that the lipoprotein should stay in the inner membrane). This chain is Outer-membrane lipoprotein carrier protein, found in Shewanella sp. (strain W3-18-1).